A 177-amino-acid polypeptide reads, in one-letter code: ATP synthase subunit b (177 aa).

A helical transmembrane segment spans residues 35 to 55; it reads FFVVLAIFLIVLAVIGTFVVP.

Belongs to the ATPase B chain family. In terms of assembly, F-type ATPases have 2 components, F(1) - the catalytic core - and F(0) - the membrane proton channel. F(1) has five subunits: alpha(3), beta(3), gamma(1), delta(1), epsilon(1). F(0) has three main subunits: a(1), b(2) and c(10-14). The alpha and beta chains form an alternating ring which encloses part of the gamma chain. F(1) is attached to F(0) by a central stalk formed by the gamma and epsilon chains, while a peripheral stalk is formed by the delta and b chains.

Its subcellular location is the cell membrane. Its function is as follows. F(1)F(0) ATP synthase produces ATP from ADP in the presence of a proton or sodium gradient. F-type ATPases consist of two structural domains, F(1) containing the extramembraneous catalytic core and F(0) containing the membrane proton channel, linked together by a central stalk and a peripheral stalk. During catalysis, ATP synthesis in the catalytic domain of F(1) is coupled via a rotary mechanism of the central stalk subunits to proton translocation. Component of the F(0) channel, it forms part of the peripheral stalk, linking F(1) to F(0). The protein is ATP synthase subunit b of Mycobacteroides abscessus (strain ATCC 19977 / DSM 44196 / CCUG 20993 / CIP 104536 / JCM 13569 / NCTC 13031 / TMC 1543 / L948) (Mycobacterium abscessus).